A 428-amino-acid polypeptide reads, in one-letter code: MSLKSIVRELREMRDGIGSMSRRAADGRAGGGRGGSRHSWPVLWSEQQQPPQQQQLQRQEHQQQQGRWANLPPELLLDVIQRVEASEATWPARRQVVACAAVCRSWREVTKEVVKTLEECGRITFPISLKQPGPREHPVQCFVRRDRATSTYLLYLGLSPSLHGENDKLLLAARKIRRATRTSFVISLVSNDFSLSSSTYVGKLKPNFLGTKFTIFDSQPPCDAVVLPNNRPSKRHFKQVSPRLPLGNYNVATVSYELTVLRNRGPRRMQCTMHSIPALCIQEGGKAPTPTGIIHSLDEQVPALSTSKGKEPAIEFSSTSLSADLSGPVCTNEVPLVLKNKAPRWHEQLQCWCLNFRGRVTVASVKNFQLVASVDPSLGIPAAEQEKVILQFGKIGKDIFTMDYRYPLSAFQAFAICLTSFDTKPACE.

The interval isoleucine 17–glutamine 65 is disordered. The segment covering glutamine 47–glutamine 65 has biased composition (low complexity). An F-box domain is found at glutamine 65 to leucine 117.

The protein belongs to the TUB family. In terms of tissue distribution, ubiquitous.

The protein is Tubby-like F-box protein 5 (TULP5) of Oryza sativa subsp. japonica (Rice).